The primary structure comprises 375 residues: Succinyl-diaminopimelate desuccinylase (375 aa).

A Zn(2+)-binding site is contributed by His66. Residue Asp68 is part of the active site. Asp99 is a Zn(2+) binding site. Glu133 acts as the Proton acceptor in catalysis. Positions 134, 162, and 348 each coordinate Zn(2+).

It belongs to the peptidase M20A family. DapE subfamily. As to quaternary structure, homodimer. Zn(2+) is required as a cofactor. Requires Co(2+) as cofactor.

The enzyme catalyses N-succinyl-(2S,6S)-2,6-diaminopimelate + H2O = (2S,6S)-2,6-diaminopimelate + succinate. It participates in amino-acid biosynthesis; L-lysine biosynthesis via DAP pathway; LL-2,6-diaminopimelate from (S)-tetrahydrodipicolinate (succinylase route): step 3/3. Catalyzes the hydrolysis of N-succinyl-L,L-diaminopimelic acid (SDAP), forming succinate and LL-2,6-diaminopimelate (DAP), an intermediate involved in the bacterial biosynthesis of lysine and meso-diaminopimelic acid, an essential component of bacterial cell walls. This Methylobacillus flagellatus (strain ATCC 51484 / DSM 6875 / VKM B-1610 / KT) protein is Succinyl-diaminopimelate desuccinylase.